A 365-amino-acid chain; its full sequence is TD and POZ domain-containing protein 1-like (365 aa).

Residues 19-149 form the MATH domain; sequence KFCYKWTISN…EDQLTICCKV (131 aa). One can recognise a BTB domain in the interval 188–255; sequence TDCCLLVAGH…IYTGKAPYLH (68 aa).

This sequence belongs to the Tdpoz family.

This chain is TD and POZ domain-containing protein 1-like, found in Mus musculus (Mouse).